The following is a 78-amino-acid chain: Large ribosomal subunit protein uL30 (78 aa).

Residues 58–68 (DDTSPDAETGA) show a composition bias toward acidic residues. Positions 58–78 (DDTSPDAETGADLERDGGNRS) are disordered. Over residues 69 to 78 (DLERDGGNRS) the composition is skewed to basic and acidic residues.

The protein belongs to the universal ribosomal protein uL30 family. Part of the 50S ribosomal subunit.

The sequence is that of Large ribosomal subunit protein uL30 from Roseiflexus sp. (strain RS-1).